Consider the following 199-residue polypeptide: Protein GrpE (199 aa).

It belongs to the GrpE family. In terms of assembly, homodimer.

It is found in the cytoplasm. Participates actively in the response to hyperosmotic and heat shock by preventing the aggregation of stress-denatured proteins, in association with DnaK and GrpE. It is the nucleotide exchange factor for DnaK and may function as a thermosensor. Unfolded proteins bind initially to DnaJ; upon interaction with the DnaJ-bound protein, DnaK hydrolyzes its bound ATP, resulting in the formation of a stable complex. GrpE releases ADP from DnaK; ATP binding to DnaK triggers the release of the substrate protein, thus completing the reaction cycle. Several rounds of ATP-dependent interactions between DnaJ, DnaK and GrpE are required for fully efficient folding. The polypeptide is Protein GrpE (Fusobacterium nucleatum subsp. nucleatum (strain ATCC 25586 / DSM 15643 / BCRC 10681 / CIP 101130 / JCM 8532 / KCTC 2640 / LMG 13131 / VPI 4355)).